Here is a 229-residue protein sequence, read N- to C-terminus: Small ribosomal subunit protein uS3 (229 aa).

A KH type-2 domain is found at 39 to 107 (VRQYLTEKLK…TAQINIAEIR (69 aa)).

Belongs to the universal ribosomal protein uS3 family. In terms of assembly, part of the 30S ribosomal subunit. Forms a tight complex with proteins S10 and S14.

Functionally, binds the lower part of the 30S subunit head. Binds mRNA in the 70S ribosome, positioning it for translation. In Shewanella denitrificans (strain OS217 / ATCC BAA-1090 / DSM 15013), this protein is Small ribosomal subunit protein uS3.